Consider the following 560-residue polypeptide: Aluminum-activated malate transporter 12 (560 aa).

A run of 6 helical transmembrane segments spans residues 54-74, 78-98, 104-124, 130-150, 156-176, and 189-209; these read VGLS…FKGI, AIWA…ATLC, GLGT…ANDS, AIFI…IRFI, NYDY…VSSY, and FYTI…VFPI. A disordered region spans residues 386-421; that stretch reads LHRHNNKHQNGSISNNKHHQRNSSNSGKDLNGDVSL. Polar residues predominate over residues 407 to 421; it reads NSSNSGKDLNGDVSL.

This sequence belongs to the aromatic acid exporter (TC 2.A.85) family. As to expression, expressed in roots, stems, leaves, flowers and pollen. Mainly detected in the roots vascular stele and in the leaves guard cells.

The protein localises to the cell membrane. Malate-sensitive anion transporter permeable to chloride, nitrate, sulfate and malate. Involved in dark-, CO(2)-, abscisic acid- and water-deficient-induced stomatal closure. Belongs to the R-type anion channels. The sequence is that of Aluminum-activated malate transporter 12 (ALMT12) from Arabidopsis thaliana (Mouse-ear cress).